We begin with the raw amino-acid sequence, 262 residues long: Acyl-coenzyme A diphosphatase FITM2 (262 aa).

Over 1 to 23 (MEHLERCAWFLRGTLVRATVRRH) the chain is Cytoplasmic. The chain crosses the membrane as a helical span at residues 24-44 (LPWALVAAMLAGSVVKELSPL). Topologically, residues 45–57 (PESYLSNKRNVLN) are lumenal. Residues 58-78 (VYFVKLAWAWTVCLLLPFIAL) form a helical membrane-spanning segment. The Cytoplasmic portion of the chain corresponds to 79–93 (TNYHLTGKTSLVLRR). Residues 94–114 (LSTLLVGTAIWYICTALFSNI) traverse the membrane as a helical segment. Residues 115-145 (EHYTGSCYQSPALEGIRQEHRSKQQCHREGG) lie on the Lumenal side of the membrane. The chain crosses the membrane as a helical span at residues 146-166 (FWHGFDISGHSFLLTFCALMI). Histidine 155 is an active-site residue. At 167–190 (VEEMAVLHEVKTDRGHHLHAAITT) the chain is on the cytoplasmic side. Residues 191–211 (LVVALGFLTFIWVWMFLCTAV) form a helical membrane-spanning segment. Over 212–218 (YFHDLTQ) the chain is Lumenal. Histidine 214 is an active-site residue. Residues 219-239 (KVFGTMFGLLGWYGTYGYWYL) traverse the membrane as a helical segment. At 240 to 262 (KSFSPGLPPQSCSLTLKRDTYKK) the chain is on the cytoplasmic side.

This sequence belongs to the FIT family. As to expression, widely expressed, with highest levels in white and brown adipose tissues (at protein level). In the heart, mRNA expression levels do not correlate well with protein levels, suggesting post-transcriptional regulation in this organ.

The protein localises to the endoplasmic reticulum membrane. The enzyme catalyses an acyl-CoA + H2O = an acyl-4'-phosphopantetheine + adenosine 3',5'-bisphosphate + 2 H(+). It catalyses the reaction (9Z)-octadecenoyl-CoA + H2O = S-(9Z-octadecenoyl)-4'-phosphopantetheine + adenosine 3',5'-bisphosphate + 2 H(+). The catalysed reaction is (5Z,8Z,11Z,14Z)-eicosatetraenoyl-CoA + H2O = S-(5Z,8Z,11Z,14Z-eicosatetraenoyl)-4'-phosphopantetheine + adenosine 3',5'-bisphosphate + 2 H(+). It carries out the reaction hexadecanoyl-CoA + H2O = S-hexadecanoyl-4'-phosphopantetheine + adenosine 3',5'-bisphosphate + 2 H(+). In terms of biological role, fatty acyl-coenzyme A (CoA) diphosphatase that hydrolyzes fatty acyl-CoA to yield acyl-4'-phosphopantetheine and adenosine 3',5'-bisphosphate. Preferentially hydrolyzes unsaturated long-chain acyl-CoA substrates such as oleoyl-CoA/(9Z)-octadecenoyl-CoA and arachidonoyl-CoA/(5Z,8Z,11Z,14Z)-eicosatetraenoyl-CoA in the endoplasmic reticulum (ER) lumen. This catalytic activity is required for maintaining ER structure and for lipid droplets (LDs) biogenesis, which are lipid storage organelles involved in maintaining lipid and energy homeostasis. Directly binds to diacylglycerol (DAGs) and triacylglycerol, which is also important for LD biogenesis. May support directional budding of nacent LDs from the ER into the cytosol by reducing DAG levels at sites of LD formation. Plays a role in the regulation of cell morphology and cytoskeletal organization. In Mus musculus (Mouse), this protein is Acyl-coenzyme A diphosphatase FITM2.